A 20-amino-acid chain; its full sequence is Apidaecin 2+ (20 aa).

Pro residues predominate over residues 1–13 (GKPNKPRPAPIKP). The disordered stretch occupies residues 1–20 (GKPNKPRPAPIKPRPPHPRL).

It is found in the secreted. In terms of biological role, antimicrobial peptide active against many Gram-negative enterobacterial and plant-associated bacterial species. Not active against other bacterial species like H.pylori, P.mirabilis, B.pertussis or N.gonorrhoeae. The polypeptide is Apidaecin 2+ (Pimpla disparis (Parasitic wasp)).